A 128-amino-acid polypeptide reads, in one-letter code: Ribonuclease pancreatic (128 aa).

The segment at 1-20 (KETAAMKFQRQHMDSGSSLS) is disordered. The substrate site is built by Lys7 and Arg10. His12 (proton acceptor) is an active-site residue. Cystine bridges form between Cys26–Cys84, Cys40–Cys95, Cys58–Cys110, and Cys65–Cys72. An N-linked (GlcNAc...) asparagine glycan is attached at Asn34. Substrate is bound by residues 41 to 45 (KPVNT), Lys66, and Arg85. The active-site Proton donor is His119.

The protein belongs to the pancreatic ribonuclease family. As to quaternary structure, monomer. Interacts with and forms tight 1:1 complexes with RNH1. Dimerization of two such complexes may occur. Interaction with RNH1 inhibits this protein. Pancreas.

It is found in the secreted. It carries out the reaction an [RNA] containing cytidine + H2O = an [RNA]-3'-cytidine-3'-phosphate + a 5'-hydroxy-ribonucleotide-3'-[RNA].. It catalyses the reaction an [RNA] containing uridine + H2O = an [RNA]-3'-uridine-3'-phosphate + a 5'-hydroxy-ribonucleotide-3'-[RNA].. Its function is as follows. Endonuclease that catalyzes the cleavage of RNA on the 3' side of pyrimidine nucleotides. Acts on single-stranded and double-stranded RNA. The polypeptide is Ribonuclease pancreatic (RNASE1) (Choloepus hoffmanni (Hoffmann's two-fingered sloth)).